The following is a 150-amino-acid chain: Regulatory protein RecX (150 aa).

This sequence belongs to the RecX family.

It is found in the cytoplasm. In terms of biological role, modulates RecA activity. The protein is Regulatory protein RecX of Legionella pneumophila (strain Corby).